The sequence spans 67 residues: Large ribosomal subunit protein uL29c (67 aa).

This sequence belongs to the universal ribosomal protein uL29 family.

The protein resides in the plastid. It is found in the chloroplast. In Porphyra purpurea (Red seaweed), this protein is Large ribosomal subunit protein uL29c (rpl29).